Here is a 622-residue protein sequence, read N- to C-terminus: Pentatricopeptide repeat-containing protein At5g06540 (622 aa).

PPR repeat units follow at residues 81 to 115 (NLFVFNLLIRCFSTGAEPSKAFGFYTQMLKSRIWP), 116 to 150 (DNITFPFLIKASSEMECVLVGEQTHSQIVRFGFQN), 151 to 181 (DVYVENSLVHMYANCGFIAAAGRIFGQMGFR), 182 to 212 (DVVSWTSMVAGYCKCGMVENAREMFDEMPHR), 213 to 247 (NLFTWSIMINGYAKNNCFEKAIDLFEFMKREGVVA), 248 to 282 (NETVMVSVISSCAHLGALEFGERAYEYVVKSHMTV), 283 to 313 (NLILGTALVDMFWRCGDIEKAIHVFEGLPET), 314 to 348 (DSLSWSSIIKGLAVHGHAHKAMHYFSQMISLGFIP), 349 to 384 (RDVTFTAVLSACSHGGLVEKGLEIYENMKKDHGIEP), and 385 to 419 (RLEHYGCIVDMLGRAGKLAEAENFILKMHVKPNAP). Positions 420 to 495 (ILGALLGACK…PPGWSLIEID (76 aa)) are type E motif. Residues 496 to 527 (GKINKFTMGDDQKHPEMGKIRRKWEEILGKIR) are type E(+) motif. The segment at 528-622 (LIGYKGNTGD…NGVCSCRDYW (95 aa)) is type DYW motif.

This sequence belongs to the PPR family. PCMP-H subfamily.

The chain is Pentatricopeptide repeat-containing protein At5g06540 (PCMP-H88) from Arabidopsis thaliana (Mouse-ear cress).